Reading from the N-terminus, the 25-residue chain is Dermaseptin-5.2TR (25 aa).

Val25 is subject to Valine amide.

In terms of tissue distribution, expressed by the skin glands.

It is found in the secreted. Has antimicrobial activity. The protein is Dermaseptin-5.2TR of Phyllomedusa trinitatis (Trinidad leaf frog).